Here is a 245-residue protein sequence, read N- to C-terminus: tRNA1(Val) (adenine(37)-N6)-methyltransferase (245 aa).

Belongs to the methyltransferase superfamily. tRNA (adenine-N(6)-)-methyltransferase family.

The protein localises to the cytoplasm. It carries out the reaction adenosine(37) in tRNA1(Val) + S-adenosyl-L-methionine = N(6)-methyladenosine(37) in tRNA1(Val) + S-adenosyl-L-homocysteine + H(+). In terms of biological role, specifically methylates the adenine in position 37 of tRNA(1)(Val) (anticodon cmo5UAC). The polypeptide is tRNA1(Val) (adenine(37)-N6)-methyltransferase (Shigella boydii serotype 18 (strain CDC 3083-94 / BS512)).